We begin with the raw amino-acid sequence, 450 residues long: Biotin carboxylase 1 (450 aa).

In terms of domain architecture, Biotin carboxylation spans 1-447; it reads MIKKLLIANR…NTKFLETYDV (447 aa). ATP-binding positions include Lys-116, Lys-158, 164 to 165, 200 to 203, and His-208; these read GG and EKYI. The 199-residue stretch at 120–318 folds into the ATP-grasp domain; the sequence is RETMKQAGVP…LIKEQIKVAS (199 aa). Hydrogencarbonate is bound at residue Lys-237. Positions 275 and 289 each coordinate ATP. The Mg(2+) site is built by Glu-275, Glu-289, and Asn-291. Mn(2+)-binding residues include Glu-275, Glu-289, and Asn-291. Hydrogencarbonate is bound by residues Arg-293, Val-296, and Arg-339. The active site involves Arg-293. Arg-339 contacts biotin.

In terms of assembly, acetyl-CoA carboxylase is a heterohexamer of biotin carboxyl carrier protein, biotin carboxylase and the two subunits of carboxyl transferase in a 2:2 complex. Mg(2+) serves as cofactor. Mn(2+) is required as a cofactor.

The catalysed reaction is N(6)-biotinyl-L-lysyl-[protein] + hydrogencarbonate + ATP = N(6)-carboxybiotinyl-L-lysyl-[protein] + ADP + phosphate + H(+). Its pathway is lipid metabolism; malonyl-CoA biosynthesis; malonyl-CoA from acetyl-CoA: step 1/1. In terms of biological role, this protein is a component of the acetyl coenzyme A carboxylase complex; first, biotin carboxylase catalyzes the carboxylation of the carrier protein and then the transcarboxylase transfers the carboxyl group to form malonyl-CoA. The chain is Biotin carboxylase 1 (accC1) from Bacillus subtilis (strain 168).